We begin with the raw amino-acid sequence, 107 residues long: uncharacterized protein (107 aa).

The next 4 membrane-spanning stretches (helical) occupy residues Phe-9 to Glu-28, Ser-33 to Ile-50, Leu-55 to Val-72, and Tyr-77 to Gly-99.

It is found in the cell membrane. This is an uncharacterized protein from Archaeoglobus fulgidus (strain ATCC 49558 / DSM 4304 / JCM 9628 / NBRC 100126 / VC-16).